A 258-amino-acid polypeptide reads, in one-letter code: Imidazole glycerol phosphate synthase subunit HisF (258 aa).

Active-site residues include aspartate 11 and aspartate 130.

This sequence belongs to the HisA/HisF family. Heterodimer of HisH and HisF.

Its subcellular location is the cytoplasm. The enzyme catalyses 5-[(5-phospho-1-deoxy-D-ribulos-1-ylimino)methylamino]-1-(5-phospho-beta-D-ribosyl)imidazole-4-carboxamide + L-glutamine = D-erythro-1-(imidazol-4-yl)glycerol 3-phosphate + 5-amino-1-(5-phospho-beta-D-ribosyl)imidazole-4-carboxamide + L-glutamate + H(+). It functions in the pathway amino-acid biosynthesis; L-histidine biosynthesis; L-histidine from 5-phospho-alpha-D-ribose 1-diphosphate: step 5/9. IGPS catalyzes the conversion of PRFAR and glutamine to IGP, AICAR and glutamate. The HisF subunit catalyzes the cyclization activity that produces IGP and AICAR from PRFAR using the ammonia provided by the HisH subunit. This is Imidazole glycerol phosphate synthase subunit HisF from Nitrobacter winogradskyi (strain ATCC 25391 / DSM 10237 / CIP 104748 / NCIMB 11846 / Nb-255).